The chain runs to 363 residues: G-protein coupled receptor 6 (363 aa).

Over 1–75 (MNASAAALNE…SGLLLSAVNP (75 aa)) the chain is Extracellular. Asn2 and Asn9 each carry an N-linked (GlcNAc...) asparagine glycan. Residues 28–51 (AGTPDTSEWGPPAASAALGGGGGP) are disordered. Asn52 is a glycosylation site (N-linked (GlcNAc...) asparagine). A helical transmembrane segment spans residues 76–95 (WDVLLCVSGTVIAGENALVV). Residues 96-107 (ALIASTPALRTP) are Cytoplasmic-facing. A helical transmembrane segment spans residues 108–131 (MFVLVGSLATADLLAGCGLILHFV). The Extracellular segment spans residues 132 to 143 (FQYVVPSETVSL). The chain crosses the membrane as a helical span at residues 144–165 (LMVGFLVASFAASVSSLLAITV). Residues 166–186 (DRYLSLYNALTYYSRRTLLGV) lie on the Cytoplasmic side of the membrane. The chain crosses the membrane as a helical span at residues 187-206 (HLLLAATWTVSLGLGLLPVL). Topologically, residues 207 to 231 (GWNCLADRASCSVVRPLTRSHVALL) are extracellular. A helical transmembrane segment spans residues 232–250 (STSFFVVFGIMLHLYVRIC). Residues 251–278 (QVVWRHAHQIALQQHCLAPPHLAATRKG) are Cytoplasmic-facing. Residues 279-305 (VGTLAVVLGTFGASWLPFAIYCVVGSQ) traverse the membrane as a helical segment. Residues 306–310 (EDPAI) are Extracellular-facing. Residues 311–332 (YTYATLLPATYNSMINPIIYAF) form a helical membrane-spanning segment. The Cytoplasmic segment spans residues 333 to 363 (RNQEIQRALWLLFCGCFQSKVPFRSRSPSEV). Cys346 carries S-palmitoyl cysteine lipidation. Ser357, Ser359, and Ser361 each carry phosphoserine.

This sequence belongs to the G-protein coupled receptor 1 family. In terms of tissue distribution, expressed in the brain, with a prominent distribution in striatum.

Its subcellular location is the cell membrane. Functionally, orphan receptor with constitutive G(s) signaling activity that activate cyclic AMP. Promotes neurite outgrowth and blocks myelin inhibition in neurons. The sequence is that of G-protein coupled receptor 6 (Gpr6) from Rattus norvegicus (Rat).